Here is a 532-residue protein sequence, read N- to C-terminus: Protein kinase domain-containing protein ppk9 (532 aa).

A Protein kinase domain is found at 23-274 (WLLGRTLGQG…VAEIMQHPWF (252 aa)). Residues 29-37 (LGQGNLAKV) and lysine 52 contribute to the ATP site. Residue aspartate 145 is the Proton acceptor of the active site. The span at 316–346 (PSSSVGQIPQPTDHSALSPSKPMSISGTESP) shows a compositional bias: polar residues. Residues 316 to 349 (PSSSVGQIPQPTDHSALSPSKPMSISGTESPNPD) are disordered.

The protein localises to the cytoplasm. The protein resides in the nucleus. It localises to the cytoskeleton. Its subcellular location is the microtubule organizing center. It is found in the spindle pole body. The protein is Protein kinase domain-containing protein ppk9 (ppk9) of Schizosaccharomyces pombe (strain 972 / ATCC 24843) (Fission yeast).